We begin with the raw amino-acid sequence, 325 residues long: MSDLQAAEGPGSWSPTARPGSAGGVGDCQGVEGSQAAASENEDLENKDTSLLASATDPEPCSSPHRPQMVSPVSKDATEDLRKATGPLEAQALVKQDLLPADQAQVLNEMAKYQVPQRSGDIVMIQSEHTGAIDVLSADLESADLLGDHRKVSPPLMAPPCIWTFAKVKEFKSKLGKEKNSRLVVKRGEVVTIRVPTHPEGKRVCWEFATDDYDIGFGVYFDWTPVTSTDITVQVSDSSDDEDEEEEEEEEIEEPVPAGDVERGSRSSLRGRYGEVMPVYRRDSHRDVQAGSHDYPGEGIYLLKFDNSYSLLRNKTLYFHIYYTS.

Residues 1-78 form a disordered region; it reads MSDLQAAEGP…MVSPVSKDAT (78 aa). Positions 159-323 constitute a GOLD domain; the sequence is PPCIWTFAKV…NKTLYFHIYY (165 aa). N6-acetyllysine is present on K169. The segment at 232 to 267 is disordered; the sequence is TVQVSDSSDDEDEEEEEEEEIEEPVPAGDVERGSRS. Positions 238-254 are enriched in acidic residues; that stretch reads SSDDEDEEEEEEEEIEE.

In Homo sapiens (Human), this protein is Protein TMED8 (TMED8).